The following is a 111-amino-acid chain: CRIB domain-containing protein RIC2 (111 aa).

One can recognise a CRIB domain in the interval I71–G84.

Interacts with ARAC11/ROP1. As to expression, expressed in roots, leaves, stems, flowers, siliques and pollen.

It is found in the cell membrane. Its function is as follows. Functions as a downstream effector of Rho-related GTP binding proteins of the 'Rho of Plants' (ROPs) family. Participates in the propagation of ROP GTPase signals in specific cellular responses. Is involved in pollen tube growth regulation through its interaction with ARAC11/ROP1. The sequence is that of CRIB domain-containing protein RIC2 (RIC2) from Arabidopsis thaliana (Mouse-ear cress).